Here is a 763-residue protein sequence, read N- to C-terminus: ATP-dependent RNA helicase MAK5 (763 aa).

Disordered regions lie at residues 1–35 and 87–169; these read MVNK…SNNN and DTKI…DNEV. Positions 18-35 are enriched in low complexity; it reads FKGSSSKGNSKTVKSNNN. A compositionally biased stretch (acidic residues) spans 104-114; sequence EIDEDAPENDL. Residues 115–127 are compositionally biased toward basic and acidic residues; it reads VEFKNMDDMKDGE. The segment covering 136–160 has biased composition (acidic residues); that stretch reads SEAEAESEAESEEEEEKTGDDEGED. The short motif at 192–220 is the Q motif element; sequence WTEKVGELSFTTLHGLTKLGFNKPTLIQE. The Helicase ATP-binding domain maps to 223-411; sequence IPMALKGEDI…SHASWKNMKT (189 aa). Residue 236 to 243 coordinates ATP; the sequence is ASTGSGKT. The DEAD box motif lies at 352–355; sequence DEAD. A Helicase C-terminal domain is found at 450–619; it reads QIKESLIECA…DIIMGKKKWQ (170 aa).

This sequence belongs to the DEAD box helicase family. DDX24/MAK5 subfamily.

The protein localises to the nucleus. It is found in the nucleolus. The enzyme catalyses ATP + H2O = ADP + phosphate + H(+). Functionally, ATP-binding RNA helicase involved in the biogenesis of 60S ribosomal subunits and is required for the normal formation of 25S and 5.8S rRNAs. This is ATP-dependent RNA helicase MAK5 (MAK5) from Vanderwaltozyma polyspora (strain ATCC 22028 / DSM 70294 / BCRC 21397 / CBS 2163 / NBRC 10782 / NRRL Y-8283 / UCD 57-17) (Kluyveromyces polysporus).